A 779-amino-acid polypeptide reads, in one-letter code: Protein WEAK CHLOROPLAST MOVEMENT UNDER BLUE LIGHT-like 1 (779 aa).

The disordered stretch occupies residues 1–119; that stretch reads MEDLKTTDAL…NAVSPRPLYS (119 aa). Residues 79–88 are compositionally biased toward polar residues; that stretch reads DSPTTPSFVS. Ser-139 bears the Phosphoserine mark. Coiled-coil stretches lie at residues 182–503, 532–587, and 657–715; these read RMKV…KQRE, KETR…ESRL, and AVSE…KWRE. A compositionally biased stretch (low complexity) spans 650-661; the sequence is ANARVAAAVSEV. Disordered stretches follow at residues 650 to 674 and 694 to 759; these read ANARVAAAVSEVGEAKETEKRSLEK and EKAE…NPVK. 2 stretches are compositionally biased toward basic and acidic residues: residues 662–674 and 694–718; these read GEAKETEKRSLEK and EKAEKAKEGKLGVEQELRKWREVSE. A compositionally biased stretch (polar residues) spans 741–753; the sequence is TSVSNETETNPIP.

The protein belongs to the WEB family.

This Arabidopsis thaliana (Mouse-ear cress) protein is Protein WEAK CHLOROPLAST MOVEMENT UNDER BLUE LIGHT-like 1 (WEL1).